A 460-amino-acid chain; its full sequence is tRNA modification GTPase MnmE (460 aa).

(6S)-5-formyl-5,6,7,8-tetrahydrofolate-binding residues include Arg29, Glu91, and Lys132. In terms of domain architecture, TrmE-type G spans 227 to 383 (GISIALIGKT…LIDTIIKKCG (157 aa)). K(+) is bound at residue Asn237. Residues 237-242 (NVGKSS), 256-262 (TNIPGTT), and 281-284 (DTAG) each bind GTP. Position 241 (Ser241) interacts with Mg(2+). Thr256, Ile258, and Thr261 together coordinate K(+). Thr262 contributes to the Mg(2+) binding site. Residue Lys460 coordinates (6S)-5-formyl-5,6,7,8-tetrahydrofolate.

The protein belongs to the TRAFAC class TrmE-Era-EngA-EngB-Septin-like GTPase superfamily. TrmE GTPase family. Homodimer. Heterotetramer of two MnmE and two MnmG subunits. It depends on K(+) as a cofactor.

It is found in the cytoplasm. In terms of biological role, exhibits a very high intrinsic GTPase hydrolysis rate. Involved in the addition of a carboxymethylaminomethyl (cmnm) group at the wobble position (U34) of certain tRNAs, forming tRNA-cmnm(5)s(2)U34. The polypeptide is tRNA modification GTPase MnmE (Prochlorococcus marinus (strain AS9601)).